The sequence spans 692 residues: Elongation factor G (692 aa).

One can recognise a tr-type G domain in the interval 8–282 (KDTRNIGIMA…AVLDYLPSPL (275 aa)). GTP contacts are provided by residues 17-24 (AHIDAGKT), 81-85 (DTPGH), and 135-138 (NKMD).

This sequence belongs to the TRAFAC class translation factor GTPase superfamily. Classic translation factor GTPase family. EF-G/EF-2 subfamily.

The protein localises to the cytoplasm. In terms of biological role, catalyzes the GTP-dependent ribosomal translocation step during translation elongation. During this step, the ribosome changes from the pre-translocational (PRE) to the post-translocational (POST) state as the newly formed A-site-bound peptidyl-tRNA and P-site-bound deacylated tRNA move to the P and E sites, respectively. Catalyzes the coordinated movement of the two tRNA molecules, the mRNA and conformational changes in the ribosome. This Shouchella clausii (strain KSM-K16) (Alkalihalobacillus clausii) protein is Elongation factor G.